A 250-amino-acid polypeptide reads, in one-letter code: Methylthioribulose-1-phosphate dehydratase (250 aa).

The Zn(2+) site is built by histidine 103 and histidine 105.

It belongs to the aldolase class II family. MtnB subfamily. It depends on Zn(2+) as a cofactor.

It carries out the reaction 5-(methylsulfanyl)-D-ribulose 1-phosphate = 5-methylsulfanyl-2,3-dioxopentyl phosphate + H2O. It functions in the pathway amino-acid biosynthesis; L-methionine biosynthesis via salvage pathway; L-methionine from S-methyl-5-thio-alpha-D-ribose 1-phosphate: step 2/6. Functionally, catalyzes the dehydration of methylthioribulose-1-phosphate (MTRu-1-P) into 2,3-diketo-5-methylthiopentyl-1-phosphate (DK-MTP-1-P). The sequence is that of Methylthioribulose-1-phosphate dehydratase from Leptospira borgpetersenii serovar Hardjo-bovis (strain JB197).